A 274-amino-acid chain; its full sequence is Large ribosomal subunit protein uL2cz/uL2cy (274 aa).

Disordered stretches follow at residues 1–26 (MAIH…KSNP) and 223–274 (MNPV…RRSK).

The protein belongs to the universal ribosomal protein uL2 family. As to quaternary structure, part of the 50S ribosomal subunit.

The protein resides in the plastid. The protein localises to the chloroplast. This is Large ribosomal subunit protein uL2cz/uL2cy (rpl2-A) from Daucus carota (Wild carrot).